Here is a 907-residue protein sequence, read N- to C-terminus: Probable dipeptidyl-aminopeptidase B (907 aa).

Positions 1-26 (MPRQRAPKEEEAELLTKQERSTRSSE) are enriched in basic and acidic residues. The interval 1-70 (MPRQRAPKEE…EKYTDEDDEA (70 aa)) is disordered. The Cytoplasmic segment spans residues 1-93 (MPRQRAPKEE…PVAVDKKTRR (93 aa)). A compositionally biased stretch (low complexity) spans 30-44 (DASVSSISTTSLVLE). Residues 94 to 114 (WLWIVGIACVTGWALALVFFL) traverse the membrane as a helical; Signal-anchor for type II membrane protein segment. At 115–907 (MSGSYKHVST…SQVDARLERR (793 aa)) the chain is on the vacuolar side. N560 carries an N-linked (GlcNAc...) asparagine glycan. Catalysis depends on S751, which acts as the Charge relay system. Residue N805 is glycosylated (N-linked (GlcNAc...) asparagine). Active-site charge relay system residues include D828 and H861.

Belongs to the peptidase S9B family.

The protein resides in the vacuole membrane. The catalysed reaction is Release of an N-terminal dipeptide, Xaa-Yaa-|-Zaa-, from a polypeptide, preferentially when Yaa is Pro, provided Zaa is neither Pro nor hydroxyproline.. In terms of biological role, type IV dipeptidyl-peptidase which removes N-terminal dipeptides sequentially from polypeptides having unsubstituted N-termini provided that the penultimate residue is proline. The sequence is that of Probable dipeptidyl-aminopeptidase B (dapB) from Pyrenophora teres f. teres (strain 0-1) (Barley net blotch fungus).